The following is a 1342-amino-acid chain: DNA-directed RNA polymerase subunit beta (1342 aa).

It belongs to the RNA polymerase beta chain family. In terms of assembly, the RNAP catalytic core consists of 2 alpha, 1 beta, 1 beta' and 1 omega subunit. When a sigma factor is associated with the core the holoenzyme is formed, which can initiate transcription.

The catalysed reaction is RNA(n) + a ribonucleoside 5'-triphosphate = RNA(n+1) + diphosphate. Functionally, DNA-dependent RNA polymerase catalyzes the transcription of DNA into RNA using the four ribonucleoside triphosphates as substrates. The protein is DNA-directed RNA polymerase subunit beta of Wigglesworthia glossinidia brevipalpis.